The following is a 320-amino-acid chain: ATP-dependent 6-phosphofructokinase (320 aa).

Gly-12 serves as a coordination point for ATP. ADP is bound at residue 22-26 (RGVVR). Residues 73–74 (RF) and 103–106 (GDGS) contribute to the ATP site. Asp-104 is a binding site for Mg(2+). 126–128 (TID) lines the substrate pocket. Catalysis depends on Asp-128, which acts as the Proton acceptor. Arg-155 provides a ligand contact to ADP. Residues Arg-163 and 170 to 172 (MGR) contribute to the substrate site. ADP-binding positions include 186 to 188 (GCE), Lys-212, and 214 to 216 (KKH). Residues Glu-223, Arg-244, and 250–253 (HIQR) each bind substrate.

Belongs to the phosphofructokinase type A (PFKA) family. ATP-dependent PFK group I subfamily. Prokaryotic clade 'B1' sub-subfamily. Homotetramer. Mg(2+) serves as cofactor.

It is found in the cytoplasm. The enzyme catalyses beta-D-fructose 6-phosphate + ATP = beta-D-fructose 1,6-bisphosphate + ADP + H(+). Its pathway is carbohydrate degradation; glycolysis; D-glyceraldehyde 3-phosphate and glycerone phosphate from D-glucose: step 3/4. With respect to regulation, allosterically activated by ADP and other diphosphonucleosides, and allosterically inhibited by phosphoenolpyruvate. Catalyzes the phosphorylation of D-fructose 6-phosphate to fructose 1,6-bisphosphate by ATP, the first committing step of glycolysis. The polypeptide is ATP-dependent 6-phosphofructokinase (Vibrio vulnificus (strain CMCP6)).